The primary structure comprises 526 residues: Amine oxidase [flavin-containing] A (526 aa).

An N-acetylmethionine modification is found at methionine 1. At 1–497 (MTDLEKPSIT…HTFLERNLPS (497 aa)) the chain is on the cytoplasmic side. Serine 383 is subject to Phosphoserine. S-8alpha-FAD cysteine is present on cysteine 406. The chain crosses the membrane as a helical; Anchor for type IV membrane protein span at residues 498–518 (VPGLLKITGFSTSVALLCFVL). The Mitochondrial intermembrane segment spans residues 519-526 (YKFKQPQS). The tract at residues 520–522 (KFK) is interaction with membrane phospholipid headgroups.

Belongs to the flavin monoamine oxidase family. As to quaternary structure, monomer, homo- or heterodimer (containing two subunits of similar size). Each subunit contains a covalently bound flavin. Enzymatically active as monomer. Requires FAD as cofactor.

Its subcellular location is the mitochondrion outer membrane. The enzyme catalyses a secondary aliphatic amine + O2 + H2O = a primary amine + an aldehyde + H2O2. The catalysed reaction is a primary methyl amine + O2 + H2O = an aldehyde + H2O2 + NH4(+). It catalyses the reaction serotonin + O2 + H2O = (5-hydroxyindol-3-yl)acetaldehyde + H2O2 + NH4(+). It carries out the reaction (R)-adrenaline + O2 + H2O = (R)-3,4-dihydroxymandelaldehyde + methylamine + H2O2. The enzyme catalyses dopamine + O2 + H2O = 3,4-dihydroxyphenylacetaldehyde + H2O2 + NH4(+). The catalysed reaction is tyramine + O2 + H2O = (4-hydroxyphenyl)acetaldehyde + H2O2 + NH4(+). It catalyses the reaction (R)-noradrenaline + O2 + H2O = (R)-3,4-dihydroxymandelaldehyde + H2O2 + NH4(+). It carries out the reaction kynuramine + O2 + H2O = 3-(2-aminophenyl)-3-oxopropanal + H2O2 + NH4(+). The enzyme catalyses tryptamine + O2 + H2O = indole-3-acetaldehyde + H2O2 + NH4(+). The catalysed reaction is 2-phenylethylamine + O2 + H2O = 2-phenylacetaldehyde + H2O2 + NH4(+). In terms of biological role, catalyzes the oxidative deamination of biogenic and xenobiotic amines and has important functions in the metabolism of neuroactive and vasoactive amines in the central nervous system and peripheral tissues. Preferentially oxidizes serotonin. Also catalyzes the oxidative deamination of kynuramine to 3-(2-aminophenyl)-3-oxopropanal that can spontaneously condense to 4-hydroxyquinoline. This Mus musculus (Mouse) protein is Amine oxidase [flavin-containing] A.